A 420-amino-acid polypeptide reads, in one-letter code: Putative U-box domain-containing protein 58 (420 aa).

The region spanning 4 to 168 is the MIF4G domain; sequence NSYVLFARLC…EDALAMKKED (165 aa). The stretch at 139-352 forms a coiled coil; that stretch reads SRVVELEGNY…TAKEQMEKRQ (214 aa). Residues 352 to 420 form the U-box domain; the sequence is QPPSSFFCPI…ALRSAIEELV (69 aa).

The catalysed reaction is S-ubiquitinyl-[E2 ubiquitin-conjugating enzyme]-L-cysteine + [acceptor protein]-L-lysine = [E2 ubiquitin-conjugating enzyme]-L-cysteine + N(6)-ubiquitinyl-[acceptor protein]-L-lysine.. The protein operates within protein modification; protein ubiquitination. Its function is as follows. Functions as an E3 ubiquitin ligase. This chain is Putative U-box domain-containing protein 58 (PUB58), found in Arabidopsis thaliana (Mouse-ear cress).